Consider the following 147-residue polypeptide: Hemoglobin subunit beta (147 aa).

Residue valine 2 is modified to N-acetylvaline. One can recognise a Globin domain in the interval 3-147 (HLTGDEKAAV…VANALAHKYH (145 aa)). Threonine 13 is subject to Phosphothreonine. A Phosphoserine modification is found at serine 45. Lysine 60 carries the N6-acetyllysine modification. Residue histidine 64 participates in heme b binding. Position 83 is an N6-acetyllysine (lysine 83). Histidine 93 is a heme b binding site. Position 94 is an S-nitrosocysteine (cysteine 94). An N6-acetyllysine modification is found at lysine 145.

Belongs to the globin family. Heterotetramer of two alpha chains and two beta chains. As to expression, red blood cells.

Involved in oxygen transport from the lung to the various peripheral tissues. The sequence is that of Hemoglobin subunit beta (HBB) from Alouatta belzebul (Red-handed howler monkey).